The following is a 447-amino-acid chain: N-succinylarginine dihydrolase (447 aa).

Substrate contacts are provided by residues 19 to 28, Asn-110, and 137 to 138; these read AGLSFGNEAS and HR. The active site involves Glu-174. Arg-212 contributes to the substrate binding site. Residue His-248 is part of the active site. 2 residues coordinate substrate: Asp-250 and Asn-359. Cys-365 functions as the Nucleophile in the catalytic mechanism.

It belongs to the succinylarginine dihydrolase family. As to quaternary structure, homodimer.

It catalyses the reaction N(2)-succinyl-L-arginine + 2 H2O + 2 H(+) = N(2)-succinyl-L-ornithine + 2 NH4(+) + CO2. The protein operates within amino-acid degradation; L-arginine degradation via AST pathway; L-glutamate and succinate from L-arginine: step 2/5. Catalyzes the hydrolysis of N(2)-succinylarginine into N(2)-succinylornithine, ammonia and CO(2). This chain is N-succinylarginine dihydrolase, found in Escherichia coli (strain K12 / MC4100 / BW2952).